An 83-amino-acid chain; its full sequence is Large ribosomal subunit protein eL14 (83 aa).

This sequence belongs to the eukaryotic ribosomal protein eL14 family.

This is Large ribosomal subunit protein eL14 from Thermococcus onnurineus (strain NA1).